A 122-amino-acid polypeptide reads, in one-letter code: Large ribosomal subunit protein uL14 (122 aa).

Belongs to the universal ribosomal protein uL14 family. In terms of assembly, part of the 50S ribosomal subunit. Forms a cluster with proteins L3 and L19. In the 70S ribosome, L14 and L19 interact and together make contacts with the 16S rRNA in bridges B5 and B8.

Its function is as follows. Binds to 23S rRNA. Forms part of two intersubunit bridges in the 70S ribosome. In Caldanaerobacter subterraneus subsp. tengcongensis (strain DSM 15242 / JCM 11007 / NBRC 100824 / MB4) (Thermoanaerobacter tengcongensis), this protein is Large ribosomal subunit protein uL14.